The chain runs to 347 residues: Microneme protein 21 (347 aa).

The protein resides in the cytoplasmic vesicle. It is found in the secretory vesicle. Its subcellular location is the microneme. It localises to the secreted. In Toxoplasma gondii, this protein is Microneme protein 21.